The sequence spans 149 residues: Endoribonuclease YbeY (149 aa).

Zn(2+)-binding residues include His112, His116, and His122.

The protein belongs to the endoribonuclease YbeY family. The cofactor is Zn(2+).

It localises to the cytoplasm. In terms of biological role, single strand-specific metallo-endoribonuclease involved in late-stage 70S ribosome quality control and in maturation of the 3' terminus of the 16S rRNA. The sequence is that of Endoribonuclease YbeY from Methylibium petroleiphilum (strain ATCC BAA-1232 / LMG 22953 / PM1).